Here is a 526-residue protein sequence, read N- to C-terminus: Spermatogenesis-associated protein 7 homolog (526 aa).

The segment at 203–240 (DFSDQRMEAETQTELSSFNSELGTAEKKSSKDSDVSIK) is disordered. A compositionally biased stretch (polar residues) spans 212–224 (ETQTELSSFNSEL). The span at 226 to 237 (TAEKKSSKDSDV) shows a compositional bias: basic and acidic residues.

In terms of assembly, found in a complex with CFAP410, NEK1 and SPATA7. Interacts with NEK1. Interacts with RPGRIP1. Interacts with RPGR. Interacts with NPHP4. Interacts with NPHP1. Interacts with AHI1. As to expression, in early prophase of primary spermatocytes.

The protein localises to the cytoplasm. The protein resides in the cytoskeleton. Its subcellular location is the cilium axoneme. It is found in the cilium basal body. It localises to the cell projection. The protein localises to the cilium. The protein resides in the photoreceptor outer segment. Its function is as follows. Involved in the maintenance of both rod and cone photoreceptor cells. Required for photoreceptor-specific localization of proximal connecting cilium (CC) proteins RPGR, AHI1, NPHP1, NPHP4, and RPGRIP1 at the distal CC, a photoreceptor-specific extension of the primary cilium transition zone. Maintenance of protein localization at the photoreceptor-specific distal CC is essential for normal microtubule stability and to prevent photoreceptor degeneration. The protein is Spermatogenesis-associated protein 7 homolog (Spata7) of Rattus norvegicus (Rat).